The chain runs to 170 residues: uncharacterized protein (170 aa).

Residues 1 to 15 are Cytoplasmic-facing; it reads MFLTSPFESCIVLSS. Residues 16 to 36 form a helical membrane-spanning segment; that stretch reads LIAGLLFSLSTGFVGILGVFA. Residues 37 to 76 are Extracellular-facing; it reads SLFETELSVSPKRLSLSSLSWPKTFWALLSSVEGVSWESS. Residues 77–97 form a helical membrane-spanning segment; the sequence is LFACIVGCCFAVTVIASLSAS. Residues 98 to 119 are Cytoplasmic-facing; the sequence is RVFGTVASSFRDSSCCCDSSPA. The chain crosses the membrane as a helical span at residues 120 to 140; the sequence is VSVLATPATAALALLSLLLSL. The Extracellular segment spans residues 141 to 170; that stretch reads PCWSTSTEAFTVDPSPSVFSMLANRITIGL.

The protein localises to the membrane. This is an uncharacterized protein from Saccharomyces cerevisiae (strain ATCC 204508 / S288c) (Baker's yeast).